A 37-amino-acid polypeptide reads, in one-letter code: Photosystem II reaction center protein Psb30 (37 aa).

Residues 10–30 (LISLLLLTLIMLAGPAVIALW) traverse the membrane as a helical segment.

It belongs to the Psb30/Ycf12 family. PSII is composed of 1 copy each of membrane proteins PsbA, PsbB, PsbC, PsbD, PsbE, PsbF, PsbH, PsbI, PsbJ, PsbK, PsbL, PsbM, PsbT, PsbX, Psb30/Ycf12, peripheral proteins PsbO, CyanoQ (PsbQ), PsbU, PsbV and a large number of cofactors. It forms dimeric complexes.

Its subcellular location is the cell inner membrane. In terms of biological role, a core subunit of photosystem II (PSII), probably helps stabilize the reaction center. In Gloeobacter violaceus (strain ATCC 29082 / PCC 7421), this protein is Photosystem II reaction center protein Psb30.